The sequence spans 627 residues: RNA interference defective protein 10 (627 aa).

Disordered stretches follow at residues 1–31 (MSNHRSNFRDYQREGIRANNAGTSGDAVRQN), 467–487 (QRDTDEQYDVHQEGPSNHDQY), and 523–589 (SSVR…SEDY). Basic and acidic residues-rich tracts occupy residues 7 to 16 (NFRDYQREGI), 467 to 478 (QRDTDEQYDVHQ), and 526 to 537 (REPEHPSARSRD).

This sequence belongs to the maelstrom family. In terms of assembly, interacts with rde-11 (via RING-type zinc finger domain). Interacts with ergo-1.

In complex with rde-11, required in the endogenous and exogenous siRNA pathway for biogenesis and accumulation of secondary small interfering RNA (siRNA) intermediates, such as 22G-siRNAs derived from ergo-1 targets. This chain is RNA interference defective protein 10, found in Caenorhabditis elegans.